A 312-amino-acid chain; its full sequence is Glyoxylate/hydroxypyruvate reductase A (312 aa).

Arg227 is a catalytic residue. The active-site Proton donor is the His275.

Belongs to the D-isomer specific 2-hydroxyacid dehydrogenase family. GhrA subfamily.

The protein resides in the cytoplasm. The enzyme catalyses glycolate + NADP(+) = glyoxylate + NADPH + H(+). It catalyses the reaction (R)-glycerate + NAD(+) = 3-hydroxypyruvate + NADH + H(+). The catalysed reaction is (R)-glycerate + NADP(+) = 3-hydroxypyruvate + NADPH + H(+). In terms of biological role, catalyzes the NADPH-dependent reduction of glyoxylate and hydroxypyruvate into glycolate and glycerate, respectively. This is Glyoxylate/hydroxypyruvate reductase A from Escherichia fergusonii (strain ATCC 35469 / DSM 13698 / CCUG 18766 / IAM 14443 / JCM 21226 / LMG 7866 / NBRC 102419 / NCTC 12128 / CDC 0568-73).